A 145-amino-acid polypeptide reads, in one-letter code: D-aminoacyl-tRNA deacylase (145 aa).

Residues 137 to 138 (GP) carry the Gly-cisPro motif, important for rejection of L-amino acids motif.

It belongs to the DTD family. In terms of assembly, homodimer.

Its subcellular location is the cytoplasm. The enzyme catalyses glycyl-tRNA(Ala) + H2O = tRNA(Ala) + glycine + H(+). It carries out the reaction a D-aminoacyl-tRNA + H2O = a tRNA + a D-alpha-amino acid + H(+). Its function is as follows. An aminoacyl-tRNA editing enzyme that deacylates mischarged D-aminoacyl-tRNAs. Also deacylates mischarged glycyl-tRNA(Ala), protecting cells against glycine mischarging by AlaRS. Acts via tRNA-based rather than protein-based catalysis; rejects L-amino acids rather than detecting D-amino acids in the active site. By recycling D-aminoacyl-tRNA to D-amino acids and free tRNA molecules, this enzyme counteracts the toxicity associated with the formation of D-aminoacyl-tRNA entities in vivo and helps enforce protein L-homochirality. The protein is D-aminoacyl-tRNA deacylase of Salmonella typhimurium (strain LT2 / SGSC1412 / ATCC 700720).